The chain runs to 392 residues: MIDCQYYQQNECRSCQWLEIPYDQQIAEKQHHLKQQLISLDCSDVHWLAPFKSNEQGFRNKAKMLVSGSVERPILGILKNPNDPQSAIDLCDCPLYPAHFSIIFSILKDFIGRAGLVPYNIAKQKGELKYILLTESIATGKLMLRFVLRTENKLPLIRRELPKLLEKLPHLEVISINLQPQHAAILEGEQEIFLTEQQFLPENFNGIPLFIRPQGFFQTNPKVAAGLYATAQQWVAEFPIYNLWDLFCGVGGFGLHCAKALQEKWGKPIKLTGIEISSSAILAASHSAKILGLEHVNFQSLNAASVMENKNENKPDLVIVNPPRRGIGKQLSEFLNQIQPHFILYSSCNAMTMGKDLQHLTCYKPLKIQLFDMFPQTSHYEVLVLLERKKIN.

[4Fe-4S] cluster-binding residues include Cys4, Cys12, Cys15, and Cys93. 4 residues coordinate S-adenosyl-L-methionine: Gln218, Phe247, Glu275, and Asn321. Residue Cys348 is the Nucleophile of the active site.

The protein belongs to the class I-like SAM-binding methyltransferase superfamily. RNA M5U methyltransferase family. RlmC subfamily.

The enzyme catalyses uridine(747) in 23S rRNA + S-adenosyl-L-methionine = 5-methyluridine(747) in 23S rRNA + S-adenosyl-L-homocysteine + H(+). Catalyzes the formation of 5-methyl-uridine at position 747 (m5U747) in 23S rRNA. This is 23S rRNA (uracil(747)-C(5))-methyltransferase RlmC from Haemophilus influenzae (strain PittEE).